Here is a 129-residue protein sequence, read N- to C-terminus: Large ribosomal subunit protein bL12c (129 aa).

Residues 101–123 (KPIKEGMSKADAEAGKKQLEEAG) show a composition bias toward basic and acidic residues. The segment at 101–129 (KPIKEGMSKADAEAGKKQLEEAGAKATLK) is disordered.

It belongs to the bacterial ribosomal protein bL12 family. Homodimer. Part of the ribosomal stalk of the 50S ribosomal subunit. Forms a multimeric L10(L12)X complex, where L10 forms an elongated spine to which 2 to 4 L12 dimers bind in a sequential fashion. Binds GTP-bound translation factors.

It localises to the plastid. Its subcellular location is the chloroplast. In terms of biological role, forms part of the ribosomal stalk which helps the ribosome interact with GTP-bound translation factors. Is thus essential for accurate translation. The sequence is that of Large ribosomal subunit protein bL12c from Guillardia theta (Cryptophyte).